The following is a 532-amino-acid chain: Telomerase Cajal body protein 1 (532 aa).

Residues 1–53 are disordered; it reads MKTSEERLLAPDSLPPDLAPAPVPQGSPAEKNTDFEPVPPPCGGDDQPQLATD. Over residues 13 to 25 the composition is skewed to pro residues; that stretch reads SLPPDLAPAPVPQ. Phosphoserine is present on residues S27, S61, and S83. The tract at residues 80–122 is disordered; that stretch reads SELSPGIEEQDVSEHASLPGEETNLPELESGEATEGVSEERAE. WD repeat units follow at residues 151-190, 206-251, 256-297, 307-348, 349-389, and 395-434; these read RSEN…YSEQ, EGDT…LRAS, NHLD…RDCE, GQSG…ALLG, GHQG…HLLW, and VTTN…SDDS. T474 carries the post-translational modification Phosphothreonine. S476 is modified (phosphoserine). The interval 510–532 is disordered; that stretch reads DPSSPVDDQDEKGQRRTEAVGMS. Positions 520–532 are enriched in basic and acidic residues; it reads EKGQRRTEAVGMS.

Belongs to the TCAB1 family. In terms of assembly, component of the telomerase holoenzyme complex composed of one molecule of TERT, one molecule of WRAP53/TCAB1, two molecules of H/ACA ribonucleoprotein complex subunits DKC1, NOP10, NHP2 and GAR1, and a telomerase RNA template component (TERC). The telomerase holoenzyme complex is associated with TEP1, SMG6/EST1A and POT1. Interacts with the chaperonin-containing T-complex (TRiC) complex; which mediates the folding of WRAP53/TCAB1. Interacts with COIL. Interacts with SMN1. Interacts with RNF8. Interacts with histone H2AX. Post-translationally, phosphorylated at Ser-61 by ATM in response to DNA damage, promoting its interaction with histone H2AX and localization to sites of DNA double-strand breaks.

It is found in the nucleus. The protein localises to the cajal body. It localises to the chromosome. The protein resides in the telomere. Functionally, RNA chaperone that plays a key role in telomere maintenance and RNA localization to Cajal bodies. Specifically recognizes and binds the Cajal body box (CAB box) present in both small Cajal body RNAs (scaRNAs) and telomerase RNA template component (TERC). Essential component of the telomerase holoenzyme complex, a ribonucleoprotein complex essential for the replication of chromosome termini that elongates telomeres in most eukaryotes. In the telomerase holoenzyme complex, required to stimulate the catalytic activity of the complex. Acts by specifically binding the CAB box of the TERC RNA and controlling the folding of the CR4/CR5 region of the TERC RNA, a critical step for telomerase activity. In addition, also controls telomerase holoenzyme complex localization to Cajal body. During S phase, required for delivery of TERC to telomeres during S phase and for telomerase activity. In addition to its role in telomere maintenance, also required for Cajal body formation, probably by mediating localization of scaRNAs to Cajal bodies. Also plays a role in DNA repair: phosphorylated by ATM in response to DNA damage and relocalizes to sites of DNA double-strand breaks to promote the repair of DNA double-strand breaks. Acts by recruiting the ubiquitin ligase RNF8 to DNA breaks and promote both homologous recombination (HR) and non-homologous end joining (NHEJ). This Mus musculus (Mouse) protein is Telomerase Cajal body protein 1.